The primary structure comprises 463 residues: Argininosuccinate lyase (463 aa).

It belongs to the lyase 1 family. Argininosuccinate lyase subfamily.

The protein localises to the cytoplasm. It catalyses the reaction 2-(N(omega)-L-arginino)succinate = fumarate + L-arginine. The protein operates within amino-acid biosynthesis; L-arginine biosynthesis; L-arginine from L-ornithine and carbamoyl phosphate: step 3/3. This Prochlorococcus marinus (strain NATL2A) protein is Argininosuccinate lyase.